Here is a 334-residue protein sequence, read N- to C-terminus: Holliday junction branch migration complex subunit RuvB (334 aa).

Positions 4-184 (ADRIISPNAT…FGIVQRLEFY (181 aa)) are large ATPase domain (RuvB-L). ATP-binding positions include isoleucine 23, arginine 24, glycine 65, lysine 68, threonine 69, threonine 70, 131–133 (EDY), arginine 174, tyrosine 184, and arginine 221. Threonine 69 is a binding site for Mg(2+). A small ATPAse domain (RuvB-S) region spans residues 185-255 (SVEDLRHIVA…VADKALNMLN (71 aa)). The head domain (RuvB-H) stretch occupies residues 258–334 (LHGFDHMDRR…YNHFGLTMPE (77 aa)). DNA is bound by residues arginine 313 and arginine 318.

This sequence belongs to the RuvB family. In terms of assembly, homohexamer. Forms an RuvA(8)-RuvB(12)-Holliday junction (HJ) complex. HJ DNA is sandwiched between 2 RuvA tetramers; dsDNA enters through RuvA and exits via RuvB. An RuvB hexamer assembles on each DNA strand where it exits the tetramer. Each RuvB hexamer is contacted by two RuvA subunits (via domain III) on 2 adjacent RuvB subunits; this complex drives branch migration. In the full resolvosome a probable DNA-RuvA(4)-RuvB(12)-RuvC(2) complex forms which resolves the HJ.

The protein localises to the cytoplasm. It carries out the reaction ATP + H2O = ADP + phosphate + H(+). In terms of biological role, the RuvA-RuvB-RuvC complex processes Holliday junction (HJ) DNA during genetic recombination and DNA repair, while the RuvA-RuvB complex plays an important role in the rescue of blocked DNA replication forks via replication fork reversal (RFR). RuvA specifically binds to HJ cruciform DNA, conferring on it an open structure. The RuvB hexamer acts as an ATP-dependent pump, pulling dsDNA into and through the RuvAB complex. RuvB forms 2 homohexamers on either side of HJ DNA bound by 1 or 2 RuvA tetramers; 4 subunits per hexamer contact DNA at a time. Coordinated motions by a converter formed by DNA-disengaged RuvB subunits stimulates ATP hydrolysis and nucleotide exchange. Immobilization of the converter enables RuvB to convert the ATP-contained energy into a lever motion, pulling 2 nucleotides of DNA out of the RuvA tetramer per ATP hydrolyzed, thus driving DNA branch migration. The RuvB motors rotate together with the DNA substrate, which together with the progressing nucleotide cycle form the mechanistic basis for DNA recombination by continuous HJ branch migration. Branch migration allows RuvC to scan DNA until it finds its consensus sequence, where it cleaves and resolves cruciform DNA. The sequence is that of Holliday junction branch migration complex subunit RuvB from Hahella chejuensis (strain KCTC 2396).